We begin with the raw amino-acid sequence, 101 residues long: Small ribosomal subunit protein uS14 (101 aa).

The protein belongs to the universal ribosomal protein uS14 family. In terms of assembly, part of the 30S ribosomal subunit. Contacts proteins S3 and S10.

Its function is as follows. Binds 16S rRNA, required for the assembly of 30S particles and may also be responsible for determining the conformation of the 16S rRNA at the A site. This Methylococcus capsulatus (strain ATCC 33009 / NCIMB 11132 / Bath) protein is Small ribosomal subunit protein uS14.